A 344-amino-acid chain; its full sequence is Dihydroorotase (344 aa).

The Zn(2+) site is built by H13 and H15. Substrate is bound by residues 15 to 17 (HVR) and N41. The Zn(2+) site is built by K99, H136, and H174. K99 carries the N6-carboxylysine modification. H136 provides a ligand contact to substrate. Position 219 (L219) interacts with substrate. D247 provides a ligand contact to Zn(2+). D247 is a catalytic residue. Positions 251 and 263 each coordinate substrate.

The protein belongs to the metallo-dependent hydrolases superfamily. DHOase family. Class II DHOase subfamily. As to quaternary structure, homodimer. Zn(2+) is required as a cofactor.

It carries out the reaction (S)-dihydroorotate + H2O = N-carbamoyl-L-aspartate + H(+). Its pathway is pyrimidine metabolism; UMP biosynthesis via de novo pathway; (S)-dihydroorotate from bicarbonate: step 3/3. Catalyzes the reversible cyclization of carbamoyl aspartate to dihydroorotate. In Azoarcus sp. (strain BH72), this protein is Dihydroorotase.